Consider the following 333-residue polypeptide: 4-hydroxythreonine-4-phosphate dehydrogenase (333 aa).

Substrate is bound by residues H133 and T134. Residues H169, H214, and H269 each coordinate a divalent metal cation. The substrate site is built by K277, N286, and R295.

This sequence belongs to the PdxA family. Homodimer. Zn(2+) is required as a cofactor. Mg(2+) serves as cofactor. Requires Co(2+) as cofactor.

Its subcellular location is the cytoplasm. The catalysed reaction is 4-(phosphooxy)-L-threonine + NAD(+) = 3-amino-2-oxopropyl phosphate + CO2 + NADH. It functions in the pathway cofactor biosynthesis; pyridoxine 5'-phosphate biosynthesis; pyridoxine 5'-phosphate from D-erythrose 4-phosphate: step 4/5. In terms of biological role, catalyzes the NAD(P)-dependent oxidation of 4-(phosphooxy)-L-threonine (HTP) into 2-amino-3-oxo-4-(phosphooxy)butyric acid which spontaneously decarboxylates to form 3-amino-2-oxopropyl phosphate (AHAP). The sequence is that of 4-hydroxythreonine-4-phosphate dehydrogenase from Caulobacter vibrioides (strain ATCC 19089 / CIP 103742 / CB 15) (Caulobacter crescentus).